Consider the following 512-residue polypeptide: Probable cytochrome P450 6d2 (512 aa).

Cys457 provides a ligand contact to heme.

Belongs to the cytochrome P450 family. Requires heme as cofactor.

Its subcellular location is the endoplasmic reticulum membrane. The protein resides in the microsome membrane. In terms of biological role, may be involved in the metabolism of insect hormones and in the breakdown of synthetic insecticides. The chain is Probable cytochrome P450 6d2 (Cyp6d2) from Drosophila melanogaster (Fruit fly).